Consider the following 419-residue polypeptide: Acyl-[acyl-carrier-protein] desaturase 6, chloroplastic (419 aa).

The N-terminal 54 residues, methionine 1–serine 54, are a transit peptide targeting the chloroplast. Residues glutamate 151, glutamate 189, histidine 192, glutamate 242, glutamate 277, and histidine 280 each contribute to the Fe cation site.

It belongs to the fatty acid desaturase type 2 family. In terms of assembly, homodimer. It depends on Fe(2+) as a cofactor.

It is found in the plastid. The protein resides in the chloroplast. It functions in the pathway lipid metabolism; fatty acid metabolism. In terms of biological role, introduces a cis double bond in the acyl chain of an acyl-[acyl-carrier protein]. This Oryza sativa subsp. japonica (Rice) protein is Acyl-[acyl-carrier-protein] desaturase 6, chloroplastic.